A 442-amino-acid chain; its full sequence is Probable protein phosphatase 2C 15 (442 aa).

A PPM-type phosphatase domain is found at 35-303; it reads AAERPELQVG…DDTTCIVVDI (269 aa). Mn(2+) is bound by residues Asp80, Gly81, Asp255, and Asp294. The span at 420-434 shows a compositional bias: basic and acidic residues; it reads KKEAMEGKRRSRDSS. The disordered stretch occupies residues 420 to 442; sequence KKEAMEGKRRSRDSSSRNSGSSE.

This sequence belongs to the PP2C family. Requires Mg(2+) as cofactor. The cofactor is Mn(2+).

The catalysed reaction is O-phospho-L-seryl-[protein] + H2O = L-seryl-[protein] + phosphate. It carries out the reaction O-phospho-L-threonyl-[protein] + H2O = L-threonyl-[protein] + phosphate. The chain is Probable protein phosphatase 2C 15 from Oryza sativa subsp. japonica (Rice).